The following is a 418-amino-acid chain: Equilibrative nucleotide transporter 3 (418 aa).

The next 11 helical transmembrane spans lie at methionine 20–isoleucine 40, valine 56–glutamate 76, leucine 86–threonine 106, isoleucine 112–valine 132, leucine 142–threonine 162, methionine 186–phenylalanine 206, tyrosine 264–tyrosine 284, glycine 291–glycine 311, lysine 326–alanine 346, tryptophan 353–methionine 373, and leucine 392–isoleucine 412.

This sequence belongs to the SLC29A/ENT transporter (TC 2.A.57) family. In terms of tissue distribution, expressed in root tips, vasculature of roots and leaves, and meristems of leaf primordia. Expressed in flowers and siliques.

It localises to the cell membrane. Functionally, nucleoside transporter that functions as a pyrimidine nucleoside carrier in all organs. Has high affinity for adenosine and uridine when expressed in a heterologous system (yeast). Mediates proton-dependent adenosine or uridine transport in Xenopus oocytes. This Arabidopsis thaliana (Mouse-ear cress) protein is Equilibrative nucleotide transporter 3.